The following is a 330-amino-acid chain: Phosphate acyltransferase (330 aa).

It belongs to the PlsX family. In terms of assembly, homodimer. Probably interacts with PlsY.

It localises to the cytoplasm. It carries out the reaction a fatty acyl-[ACP] + phosphate = an acyl phosphate + holo-[ACP]. The protein operates within lipid metabolism; phospholipid metabolism. Catalyzes the reversible formation of acyl-phosphate (acyl-PO(4)) from acyl-[acyl-carrier-protein] (acyl-ACP). This enzyme utilizes acyl-ACP as fatty acyl donor, but not acyl-CoA. The polypeptide is Phosphate acyltransferase (Streptococcus pneumoniae (strain P1031)).